A 67-amino-acid polypeptide reads, in one-letter code: DNA gyrase inhibitor YacG (67 aa).

4 residues coordinate Zn(2+): C8, C11, C27, and C31.

The protein belongs to the DNA gyrase inhibitor YacG family. In terms of assembly, interacts with GyrB. It depends on Zn(2+) as a cofactor.

Its function is as follows. Inhibits all the catalytic activities of DNA gyrase by preventing its interaction with DNA. Acts by binding directly to the C-terminal domain of GyrB, which probably disrupts DNA binding by the gyrase. This Ralstonia pickettii (strain 12J) protein is DNA gyrase inhibitor YacG.